The following is a 563-amino-acid chain: Light-independent protochlorophyllide reductase subunit B (563 aa).

D36 contributes to the [4Fe-4S] cluster binding site. D349 acts as the Proton donor in catalysis. 484–485 (GM) is a binding site for substrate.

Belongs to the ChlB/BchB/BchZ family. Protochlorophyllide reductase is composed of three subunits; ChlL, ChlN and ChlB. Forms a heterotetramer of two ChlB and two ChlN subunits. It depends on [4Fe-4S] cluster as a cofactor.

Its subcellular location is the plastid. It localises to the chloroplast. It catalyses the reaction chlorophyllide a + oxidized 2[4Fe-4S]-[ferredoxin] + 2 ADP + 2 phosphate = protochlorophyllide a + reduced 2[4Fe-4S]-[ferredoxin] + 2 ATP + 2 H2O. It participates in porphyrin-containing compound metabolism; chlorophyll biosynthesis (light-independent). Component of the dark-operative protochlorophyllide reductase (DPOR) that uses Mg-ATP and reduced ferredoxin to reduce ring D of protochlorophyllide (Pchlide) to form chlorophyllide a (Chlide). This reaction is light-independent. The NB-protein (ChlN-ChlB) is the catalytic component of the complex. The protein is Light-independent protochlorophyllide reductase subunit B of Chlamydomonas moewusii (Chlamydomonas eugametos).